Reading from the N-terminus, the 154-residue chain is Large ribosomal subunit protein uL23z (154 aa).

The protein belongs to the universal ribosomal protein uL23 family.

Its function is as follows. Binds to a specific region on the 26S rRNA. In Arabidopsis thaliana (Mouse-ear cress), this protein is Large ribosomal subunit protein uL23z (RPL23AA).